The following is a 1409-amino-acid chain: L-2-aminoadipate reductase large subunit (1409 aa).

The Carrier domain maps to 858–937 (QALSETEQTL…GFASEIDRLL (80 aa)). Residue Ser-896 is modified to O-(pantetheine 4'-phosphoryl)serine.

The protein belongs to the ATP-dependent AMP-binding enzyme family. In terms of assembly, heterodimer of an alpha and a beta subunit. It depends on pantetheine 4'-phosphate as a cofactor.

The enzyme catalyses (S)-2-amino-6-oxohexanoate + NADP(+) + H2O = L-2-aminoadipate + NADPH + 2 H(+). It catalyses the reaction (S)-2-amino-6-oxohexanoate + NAD(+) + H2O = L-2-aminoadipate + NADH + 2 H(+). It carries out the reaction (S)-2-amino-6-oxohexanoate + AMP + diphosphate + NADP(+) = L-2-aminoadipate + ATP + NADPH + H(+). It participates in amino-acid biosynthesis; L-lysine biosynthesis via AAA pathway; L-lysine from L-alpha-aminoadipate (fungal route): step 1/3. Functionally, catalyzes the activation of alpha-aminoadipate by ATP-dependent adenylation and the reduction of activated alpha-aminoadipate by NADPH. The activated alpha-aminoadipate is bound to the phosphopantheinyl group of the enzyme itself before it is reduced to (S)-2-amino-6-oxohexanoate. The protein is L-2-aminoadipate reductase large subunit (lys2) of Penicillium chrysogenum (Penicillium notatum).